The primary structure comprises 416 residues: Isobutyryl-CoA dehydrogenase, mitochondrial (416 aa).

The N-terminal 23 residues, 1–23 (MMLRGGCQRVGARLRGLRRGPRG), are a transit peptide targeting the mitochondrion. Lys51 is modified (N6-acetyllysine; alternate). Lys51 is modified (N6-succinyllysine; alternate). Residues 159-168 (YCLTEPGSGS) and 192-194 (FIS) each bind FAD. Ser168 contributes to the substrate binding site. Position 232 is an N6-acetyllysine (Lys232). An N6-succinyllysine modification is found at Lys272. Residue 275 to 278 (NGGR) participates in substrate binding. FAD is bound by residues Arg303, 313–314 (SQ), and 372–376 (QMHGG). Glu399 (proton acceptor) is an active-site residue. 401–403 (SNE) serves as a coordination point for FAD. Residue Arg411 coordinates substrate.

It belongs to the acyl-CoA dehydrogenase family. In terms of assembly, homotetramer, formed by a dimer of dimers. It depends on FAD as a cofactor.

It localises to the mitochondrion. It catalyses the reaction 2-methylpropanoyl-CoA + oxidized [electron-transfer flavoprotein] + H(+) = 2-methylpropenoyl-CoA + reduced [electron-transfer flavoprotein]. The enzyme catalyses (2S)-2-methylbutanoyl-CoA + oxidized [electron-transfer flavoprotein] + H(+) = (2E)-2-methylbut-2-enoyl-CoA + reduced [electron-transfer flavoprotein]. It carries out the reaction propanoyl-CoA + oxidized [electron-transfer flavoprotein] + H(+) = acryloyl-CoA + reduced [electron-transfer flavoprotein]. It participates in amino-acid degradation; L-valine degradation. Functionally, isobutyryl-CoA dehydrogenase which catalyzes the conversion of 2-methylpropanoyl-CoA to (2E)-2-methylpropenoyl-CoA in the valine catabolic pathway. To a lesser extent, also able to catalyze the oxidation of (2S)-2-methylbutanoyl-CoA. The protein is Isobutyryl-CoA dehydrogenase, mitochondrial (ACAD8) of Bos taurus (Bovine).